The following is a 1054-amino-acid chain: Acid trehalase (1054 aa).

A signal peptide spans 1–21 (MRFKSVFTLLPLLAQLPSGGA). Residues N47, N135, N176, N283, and N307 are each glycosylated (N-linked (GlcNAc...) asparagine). Position 448-449 (448-449 (WD)) interacts with substrate. 4 N-linked (GlcNAc...) asparagine glycosylation sites follow: N493, N513, N570, and N578. Catalysis depends on E584, which acts as the Proton donor. 2 N-linked (GlcNAc...) asparagine glycosylation sites follow: N618 and N644. A substrate-binding site is contributed by 650–651 (KQ). N-linked (GlcNAc...) asparagine glycosylation is found at N665, N734, N803, N826, N838, N903, N937, N966, and N992.

This sequence belongs to the glycosyl hydrolase 65 family.

The enzyme catalyses alpha,alpha-trehalose + H2O = alpha-D-glucose + beta-D-glucose. This chain is Acid trehalase (treA), found in Emericella nidulans (strain FGSC A4 / ATCC 38163 / CBS 112.46 / NRRL 194 / M139) (Aspergillus nidulans).